The chain runs to 93 residues: DNA-directed RNA polymerase subunit omega (93 aa).

It belongs to the RNA polymerase subunit omega family. The RNAP catalytic core consists of 2 alpha, 1 beta, 1 beta' and 1 omega subunit. When a sigma factor is associated with the core the holoenzyme is formed, which can initiate transcription.

The enzyme catalyses RNA(n) + a ribonucleoside 5'-triphosphate = RNA(n+1) + diphosphate. Its function is as follows. Promotes RNA polymerase assembly. Latches the N- and C-terminal regions of the beta' subunit thereby facilitating its interaction with the beta and alpha subunits. The protein is DNA-directed RNA polymerase subunit omega of Shewanella loihica (strain ATCC BAA-1088 / PV-4).